The sequence spans 284 residues: 2-dehydro-3-deoxyphosphooctonate aldolase (284 aa).

The protein belongs to the KdsA family.

The protein localises to the cytoplasm. It carries out the reaction D-arabinose 5-phosphate + phosphoenolpyruvate + H2O = 3-deoxy-alpha-D-manno-2-octulosonate-8-phosphate + phosphate. The protein operates within carbohydrate biosynthesis; 3-deoxy-D-manno-octulosonate biosynthesis; 3-deoxy-D-manno-octulosonate from D-ribulose 5-phosphate: step 2/3. Its pathway is bacterial outer membrane biogenesis; lipopolysaccharide biosynthesis. The sequence is that of 2-dehydro-3-deoxyphosphooctonate aldolase from Aliivibrio fischeri (strain ATCC 700601 / ES114) (Vibrio fischeri).